A 485-amino-acid polypeptide reads, in one-letter code: Glutamate--tRNA ligase 1 (485 aa).

Residues 10 to 20 (PSPTGAIHIGN) carry the 'HIGH' region motif. A 'KMSKS' region motif is present at residues 252–256 (KLSKR). K255 provides a ligand contact to ATP.

This sequence belongs to the class-I aminoacyl-tRNA synthetase family. Glutamate--tRNA ligase type 1 subfamily. Monomer.

The protein localises to the cytoplasm. The enzyme catalyses tRNA(Glu) + L-glutamate + ATP = L-glutamyl-tRNA(Glu) + AMP + diphosphate. Its function is as follows. Catalyzes the attachment of glutamate to tRNA(Glu) in a two-step reaction: glutamate is first activated by ATP to form Glu-AMP and then transferred to the acceptor end of tRNA(Glu). The protein is Glutamate--tRNA ligase 1 of Thermoanaerobacter sp. (strain X514).